The following is a 509-amino-acid chain: UDP-N-acetylmuramyl-tripeptide synthetase (509 aa).

124–130 (GTNGKTS) provides a ligand contact to ATP. Residues 164-165 (TT), S191, and R199 each bind UDP-N-acetyl-alpha-D-muramoyl-L-alanyl-D-glutamate. K231 bears the N6-carboxylysine mark.

Belongs to the MurCDEF family. MurE subfamily. Post-translationally, carboxylation is probably crucial for Mg(2+) binding and, consequently, for the gamma-phosphate positioning of ATP.

The protein localises to the cytoplasm. It participates in cell wall biogenesis; peptidoglycan biosynthesis. Catalyzes the addition of an amino acid to the nucleotide precursor UDP-N-acetylmuramoyl-L-alanyl-D-glutamate (UMAG) in the biosynthesis of bacterial cell-wall peptidoglycan. The chain is UDP-N-acetylmuramyl-tripeptide synthetase from Tropheryma whipplei (strain TW08/27) (Whipple's bacillus).